The following is a 66-amino-acid chain: ATP synthase subunit c (66 aa).

2 helical membrane-spanning segments follow: residues 3 to 23 (LTFL…GLLM) and 45 to 65 (FLGV…SFII).

The protein belongs to the ATPase C chain family. As to quaternary structure, F-type ATPases have 2 components, F(1) - the catalytic core - and F(0) - the membrane proton channel. F(1) has five subunits: alpha(3), beta(3), gamma(1), delta(1), epsilon(1). F(0) has three main subunits: a(1), b(2) and c(10-14). The alpha and beta chains form an alternating ring which encloses part of the gamma chain. F(1) is attached to F(0) by a central stalk formed by the gamma and epsilon chains, while a peripheral stalk is formed by the delta and b chains.

Its subcellular location is the cell membrane. In terms of biological role, f(1)F(0) ATP synthase produces ATP from ADP in the presence of a proton or sodium gradient. F-type ATPases consist of two structural domains, F(1) containing the extramembraneous catalytic core and F(0) containing the membrane proton channel, linked together by a central stalk and a peripheral stalk. During catalysis, ATP synthesis in the catalytic domain of F(1) is coupled via a rotary mechanism of the central stalk subunits to proton translocation. Key component of the F(0) channel; it plays a direct role in translocation across the membrane. A homomeric c-ring of between 10-14 subunits forms the central stalk rotor element with the F(1) delta and epsilon subunits. In Streptococcus pneumoniae serotype 19F (strain G54), this protein is ATP synthase subunit c.